A 222-amino-acid polypeptide reads, in one-letter code: E3 ubiquitin-protein ligase RNF138 (222 aa).

The segment at 17–57 adopts an RING-type zinc-finger fold; that stretch reads CPVCQEILQTPVRTQTCRHVFCRKCFMLAMKSGGAYCPLCR. Zn(2+) contacts are provided by Cys-85, Cys-88, His-100, and Cys-104. The segment at 85-104 adopts a C2HC RNF-type zinc-finger fold; the sequence is CMYCGKMMKLHYMKLHYKSC. 2 consecutive C2H2-type zinc fingers follow at residues 134–157 and 164–192; these read YKCP…NNVH and MVCP…NARH. Residues 202-220 enclose the UIM domain; the sequence is INIDEEAQFQIAVANSYKI.

Interacts with nlk.2 (via C-terminus) and ube2k. Auto-ubiquitinated.

Its subcellular location is the chromosome. It carries out the reaction S-ubiquitinyl-[E2 ubiquitin-conjugating enzyme]-L-cysteine + [acceptor protein]-L-lysine = [E2 ubiquitin-conjugating enzyme]-L-cysteine + N(6)-ubiquitinyl-[acceptor protein]-L-lysine.. It participates in protein modification; protein ubiquitination. Functionally, E3 ubiquitin-protein ligase involved in DNA damage response by promoting DNA resection and homologous recombination. Recruited to sites of double-strand breaks following DNA damage and specifically promotes double-strand break repair via homologous recombination. Together with nlk.2, involved in the ubiquitination and degradation of TCF/LEF. Also exhibits auto-ubiquitination activity in combination with ube2k. May act as a negative regulator in the Wnt/beta-catenin-mediated signaling pathway. The polypeptide is E3 ubiquitin-protein ligase RNF138 (rnf138) (Xenopus laevis (African clawed frog)).